The primary structure comprises 433 residues: Oxidoreductase acuF (433 aa).

Its pathway is secondary metabolite biosynthesis. Functionally, oxidoreductase; part of the gene cluster that mediates the biosynthesis of aculins. The pathway begins with the synthesis of 6-methylsalicylic acid by the polyketide synthase (PKS) acuA via condensation of acetate and malonate units. The 6-methylsalicylic acid decarboxylase acuB then catalyzes the decarboxylation of 6-methylsalicylic acid to yield m-cresol (also known as 3-methylphenol). These first reactions occur in the cytosol. The intermediate m-cresol is then transported into the endoplasmic reticulum where the cytochrome P450 monooxygenase acuC converts it to m-hydroxybenzyl alcohol, which is further converted to gentisyl alcohol by the cytochrome P450 monooxygenase acuD. Gentisyl alcohol is further oxidized by the oxidoreductase acuE that probably catalyzes hydroxylation of the aromatic ring. The aromatic system might then be opened by oxidation through a Baeyer-Villiger type of oxidation, which could be catalyzed by acuF, with the carboxylic acid at C-1 subsequently reduced to an aldehyde by acuG. Subsequently, a hemiacetal is formed, before the dehydrogenase acuH would reduce the double bond between C-4 and C-6. Finally, keto-enol tautomerism results in formation of aculinic acid, which exists as two diastereomers (both R/S configurations at C-1) by non-enzymatic hemiacetal formation. The carboxypeptidase acuI could be involved in the linking of aculinic acid to an aculene A moiety produced by the aculene biosynthesis cluster and which leads to the production of aculin A. AcuI may also be involved in the attachment of proline to aculinic acid to form epi-aculins A and B. The polypeptide is Oxidoreductase acuF (Aspergillus aculeatus (strain ATCC 16872 / CBS 172.66 / WB 5094)).